A 128-amino-acid polypeptide reads, in one-letter code: Large ribosomal subunit protein uL22 (128 aa).

This sequence belongs to the universal ribosomal protein uL22 family. As to quaternary structure, part of the 50S ribosomal subunit.

In terms of biological role, this protein binds specifically to 23S rRNA; its binding is stimulated by other ribosomal proteins, e.g. L4, L17, and L20. It is important during the early stages of 50S assembly. It makes multiple contacts with different domains of the 23S rRNA in the assembled 50S subunit and ribosome. Its function is as follows. The globular domain of the protein is located near the polypeptide exit tunnel on the outside of the subunit, while an extended beta-hairpin is found that lines the wall of the exit tunnel in the center of the 70S ribosome. The chain is Large ribosomal subunit protein uL22 from Rhodopseudomonas palustris (strain BisA53).